Here is a 509-residue protein sequence, read N- to C-terminus: Maturase K (509 aa).

The protein belongs to the intron maturase 2 family. MatK subfamily.

It localises to the plastid. The protein resides in the chloroplast. Usually encoded in the trnK tRNA gene intron. Probably assists in splicing its own and other chloroplast group II introns. This is Maturase K from Thujopsis dolabrata (Hiba arborvitae).